The primary structure comprises 1408 residues: MLTLLEPPGAKRSPTVGNYNNRSAQHLLNLAPEEDDLYETYEETEDYAENEPTGNILTRSFQFLDQYLVGQSSSADYNDRWKREFRARPSWCDADLCLQQMNRGKATGNRYALYSRSLIQKLLFALGNTVHRNAWSIILAVSMIFAVCCYGLQYVHIETDIVKLWVAQGGRLDEELNFLPNIKEAMRNVTGDSGPELPRENGLGGGYQVLIQTPEYEGQDALAAGPLLKHVEIMKHIASFNVSVHGVDWSLSDICFKPAPPSVAADSAASSLGDVIDKIVPCIWITPIDCFWEGSKALGPHPSLPKSSLGPLGMLLSSLSDGDMIRWSDFDPIAVIDEIHRSFNLGSHYTFFERAGVSHGYMDRPCIDPLDPECPPMAKNYFDVCPHIDRVREIAKKYGTELEEEKKKDSGYSFFDFLGRKKREAGDQPKMIHPAQPADSIPTIEDAVPAQVPVSTAPIPTTTTLSPEEARAAEEKEKKQKARELKDYCKSYRKSAFEWLKKNKDKWPEVMSENMYPQNVDYAAEMTGGCSGFASNVLNWPEDMILGNPRRAKKGGKLSGADALQSVFLVASPADVFLRFKQKPGRNSMKTGLDMDAWNETAAEQVLQAWQRNFTKSLYNHKANVDEDGNERRTLHPLASTSIADMLEEFCQFNYTIILAGYALMLAYAIVTQARFDNCLPATESSMGLALAGVLVVTFASVAGLGLATWFGIEFNAATTQIVPFLTLGIGVDNMFMLLHNYRDVVKLAGGHAEMAILMRETGMSILCTSINNILSFLTGTLLPIPALRSFCAQSSILLTFNFIAILTIYPAIISIDLRRKKAQRRDLVCCLYGDTREESYSMISKPKIQSKRIIGAPSEASIMQQFDGITQAQMASSDDPAPWSLHSFIRYYYIPFISKPASKVAIIVGCCALLGASFIGMRQSTLGLELGDVLPEHTAPAQFLRARDKYFSFYPMFAVIKGPNIDYAHQQRQIDNYRQSIGSSKYVIKNKNEEPSEKYWLGLMRDWLISIQRGFDEEVAKGSFNLTSGTVIGSNVSEDARLAHALMCSHGSLFGCAGRVGKIRLVDASGIINSDGFYNYLTAWFNVDHMMYYVSQASFFPTPPKWELSKNHTENFIPAAEPLAYSQIPFYLTGLTDTAVIVDAIKDIRSVCERFTDQGLPNFPQGIAFTFWEQYLFLTGNLMQAISIITISVFCVISVLLFNPWAALMVVCILGIMTCELAGFMGLVGIKLNPVSAVTLITAVGIGVEFTVHVVVSFLTALGTRSQRTSSAVDRVFVPVIHGSFSTLLGILMLGFSEFEFVVKYFFIVMTALICIGIINGLILLPVLLSWFGPRREISPTGGKTTLTLPPPLPKNANSSRSGGDDSDEDDEPSGLVMYSRQAPPTTRTSGGNRGTVGNNTRRLPAV.

Residues 1–20 are disordered; that stretch reads MLTLLEPPGAKRSPTVGNYN. Over 1-136 the chain is Cytoplasmic; the sequence is MLTLLEPPGA…GNTVHRNAWS (136 aa). The chain crosses the membrane as a helical span at residues 137 to 157; the sequence is IILAVSMIFAVCCYGLQYVHI. The Extracellular segment spans residues 158–649; the sequence is ETDIVKLWVA…STSIADMLEE (492 aa). Residues 455–479 form a disordered region; that stretch reads STAPIPTTTTLSPEEARAAEEKEKK. A compositionally biased stretch (basic and acidic residues) spans 468-479; sequence EEARAAEEKEKK. Asn599 carries an N-linked (GlcNAc...) asparagine glycan. Residues 650–670 traverse the membrane as a helical segment; it reads FCQFNYTIILAGYALMLAYAI. Residues 654 to 816 enclose the SSD domain; the sequence is NYTIILAGYA…LTIYPAIISI (163 aa). At 671 to 686 the chain is on the cytoplasmic side; the sequence is VTQARFDNCLPATESS. The helical transmembrane segment at 687 to 707 threads the bilayer; it reads MGLALAGVLVVTFASVAGLGL. Over 708–709 the chain is Extracellular; the sequence is AT. A helical membrane pass occupies residues 710-730; it reads WFGIEFNAATTQIVPFLTLGI. Topologically, residues 731 to 765 are cytoplasmic; that stretch reads GVDNMFMLLHNYRDVVKLAGGHAEMAILMRETGMS. Residues 766-786 traverse the membrane as a helical segment; that stretch reads ILCTSINNILSFLTGTLLPIP. Residues 787-795 are Extracellular-facing; it reads ALRSFCAQS. A helical membrane pass occupies residues 796–816; sequence SILLTFNFIAILTIYPAIISI. The Cytoplasmic portion of the chain corresponds to 817–901; sequence DLRRKKAQRR…YYYIPFISKP (85 aa). Residues 902 to 922 form a helical membrane-spanning segment; the sequence is ASKVAIIVGCCALLGASFIGM. The Extracellular segment spans residues 923–1175; sequence RQSTLGLELG…QGIAFTFWEQ (253 aa). Asn1026 and Asn1036 each carry an N-linked (GlcNAc...) asparagine glycan. The chain crosses the membrane as a helical span at residues 1176-1196; the sequence is YLFLTGNLMQAISIITISVFC. Topologically, residues 1197–1217 are cytoplasmic; sequence VISVLLFNPWAALMVVCILGI. 2 helical membrane-spanning segments follow: residues 1218-1238 and 1239-1259; these read MTCELAGFMGLVGIKLNPVSA and VTLITAVGIGVEFTVHVVVSF. At 1260–1276 the chain is on the extracellular side; the sequence is LTALGTRSQRTSSAVDR. A helical membrane pass occupies residues 1277–1297; the sequence is VFVPVIHGSFSTLLGILMLGF. Residues 1298 to 1305 lie on the Cytoplasmic side of the membrane; that stretch reads SEFEFVVK. Residues 1306-1326 traverse the membrane as a helical segment; the sequence is YFFIVMTALICIGIINGLILL. Topologically, residues 1327–1408 are extracellular; it reads PVLLSWFGPR…GNNTRRLPAV (82 aa). The segment at 1342–1408 is disordered; the sequence is TGGKTTLTLP…GNNTRRLPAV (67 aa). The segment covering 1387–1408 has biased composition (low complexity); it reads TTRTSGGNRGTVGNNTRRLPAV.

The protein belongs to the patched family. In terms of tissue distribution, germ line and its progenitors.

The protein resides in the membrane. Functionally, required but not essential for cytokinesis of mitotically proliferating germ cells. The protein is Protein patched homolog 1 (ptc-1) of Caenorhabditis elegans.